A 274-amino-acid polypeptide reads, in one-letter code: Large ribosomal subunit protein uL2 (274 aa).

Residues 223–256 (VAMNPVDHPHGGGEGRTSGGRHPVTPWGIPTKGY) are disordered.

It belongs to the universal ribosomal protein uL2 family. In terms of assembly, part of the 50S ribosomal subunit. Forms a bridge to the 30S subunit in the 70S ribosome.

One of the primary rRNA binding proteins. Required for association of the 30S and 50S subunits to form the 70S ribosome, for tRNA binding and peptide bond formation. It has been suggested to have peptidyltransferase activity; this is somewhat controversial. Makes several contacts with the 16S rRNA in the 70S ribosome. The polypeptide is Large ribosomal subunit protein uL2 (Trichlorobacter lovleyi (strain ATCC BAA-1151 / DSM 17278 / SZ) (Geobacter lovleyi)).